Consider the following 174-residue polypeptide: ATP synthase subunit delta, sodium ion specific (174 aa).

Belongs to the ATPase delta chain family. In terms of assembly, F-type ATPases have 2 components, F(1) - the catalytic core - and F(0) - the membrane proton channel. F(1) has five subunits: alpha(3), beta(3), gamma(1), delta(1), epsilon(1). F(0) has three main subunits: a(1), b(2) and c(10-14). The alpha and beta chains form an alternating ring which encloses part of the gamma chain. F(1) is attached to F(0) by a central stalk formed by the gamma and epsilon chains, while a peripheral stalk is formed by the delta and b chains.

The protein localises to the cell inner membrane. Functionally, f(1)F(0) ATP synthase produces ATP from ADP in the presence of a proton or sodium gradient. F-type ATPases consist of two structural domains, F(1) containing the extramembraneous catalytic core and F(0) containing the membrane proton channel, linked together by a central stalk and a peripheral stalk. During catalysis, ATP synthesis in the catalytic domain of F(1) is coupled via a rotary mechanism of the central stalk subunits to proton translocation. In terms of biological role, this protein is part of the stalk that links CF(0) to CF(1). It either transmits conformational changes from CF(0) to CF(1) or is implicated in proton conduction. This chain is ATP synthase subunit delta, sodium ion specific, found in Ilyobacter tartaricus.